A 192-amino-acid polypeptide reads, in one-letter code: Elongation factor P (192 aa).

The protein belongs to the elongation factor P family.

It is found in the cytoplasm. It participates in protein biosynthesis; polypeptide chain elongation. In terms of biological role, involved in peptide bond synthesis. Stimulates efficient translation and peptide-bond synthesis on native or reconstituted 70S ribosomes in vitro. Probably functions indirectly by altering the affinity of the ribosome for aminoacyl-tRNA, thus increasing their reactivity as acceptors for peptidyl transferase. This chain is Elongation factor P, found in Borreliella afzelii (strain PKo) (Borrelia afzelii).